Consider the following 106-residue polypeptide: Nucleoid-associated protein Smal_0858 (106 aa).

The tract at residues 81 to 106 (IDAESKSKMGSATAGMQLPPGMKLPF) is disordered.

This sequence belongs to the YbaB/EbfC family. Homodimer.

It is found in the cytoplasm. It localises to the nucleoid. Functionally, binds to DNA and alters its conformation. May be involved in regulation of gene expression, nucleoid organization and DNA protection. This Stenotrophomonas maltophilia (strain R551-3) protein is Nucleoid-associated protein Smal_0858.